Consider the following 47-residue polypeptide: Large ribosomal subunit protein bL34 (47 aa).

This sequence belongs to the bacterial ribosomal protein bL34 family.

In Corynebacterium glutamicum (strain R), this protein is Large ribosomal subunit protein bL34.